A 699-amino-acid polypeptide reads, in one-letter code: Transcription factor MYC2 (699 aa).

The tract at residues 25 to 60 (PWGAASTPPPPPPPPHHHHQQQQQQVLPPPAAAPAA) is disordered. Positions 93 to 158 (IDVSTGASLL…AAPDEAVEEE (66 aa)) are JAZ-interaction domain. Positions 290–530 (DISVSKPPPP…EPLNHVEAER (241 aa)) are disordered. Residues 306–321 (HFENGSTSTLTENPSP) show a composition bias toward polar residues. 2 stretches are compositionally biased toward low complexity: residues 335-349 (PQRQQQQQQSSQAQQ) and 387-412 (SSSGRRNPSPAPPAATASLTTAPGSL). 2 stretches are compositionally biased toward polar residues: residues 413–449 (FSQHTPTLTAAANDAKSNNQKRSMEATSRASNTNNHP) and 459–472 (SFSSAPTTRPSTGT). Residues 478–494 (SESDHSDLEASVREVES) show a composition bias toward basic and acidic residues. Positions 506–514 (KRPRKRGRK) match the Nuclear localization signal motif. The segment covering 507 to 516 (RPRKRGRKPA) has biased composition (basic residues). Basic and acidic residues predominate over residues 517 to 530 (NGREEPLNHVEAER). The basic motif; degenerate stretch occupies residues 520 to 533 (EEPLNHVEAERQRR). One can recognise a bHLH domain in the interval 520–569 (EEPLNHVEAERQRREKLNQRFYALRAVVPNVSKMDKASLLGDAISYINEL). Residues 534–569 (EKLNQRFYALRAVVPNVSKMDKASLLGDAISYINEL) form a helix-loop-helix motif region. Positions 582–611 (TLQSQMESLKKERDARPPAPSGGGGDGGAR) are disordered.

This sequence belongs to the bHLH protein family. Interacts with TIFY3/JAZ1. Highly expressed in spikelets and floral organs.

The protein localises to the nucleus. Functionally, transcriptional activator involved in jasmonate (JA) signaling pathway during spikelet development. Binds to the G2 region G-box (5'-CACGTG-3') of the MADS1 promoter and thus directly regulates the expression of MADS1. Its function in MADS1 activation is abolished by TIFY3/JAZ1 which directly target MYC2 during spikelet development. In Oryza sativa subsp. japonica (Rice), this protein is Transcription factor MYC2.